The primary structure comprises 368 residues: mRNA export factor (368 aa).

Residues 15-34 (TSMFGSTTTDNHNPMKDIEV) are disordered. 7 WD repeats span residues 37-79 (SPDD…QTIP), 84-114 (MHTG…KMWD), 125-157 (QHDA…KFWD), 168-206 (QLPE…EFRR), 215-255 (HRCV…KDNF), 271-301 (QDIY…SFWD), and 310-346 (TSEQ…EFYN). The residue at position 229 (Thr-229) is a Phosphothreonine.

This sequence belongs to the WD repeat rae1 family. Interacts with NUMA1 (via N-terminal end of the coiled-coil domain); this interaction promotes spindle formation in mitosis. Interacts with NUP98. Interacts with MYCBP2. Interacts with USP11.

It localises to the cytoplasm. It is found in the nucleus. The protein localises to the cytoskeleton. The protein resides in the spindle pole. In terms of biological role, plays a role in mitotic bipolar spindle formation. Binds mRNA. May function in nucleocytoplasmic transport and in directly or indirectly attaching cytoplasmic mRNPs to the cytoskeleton. This is mRNA export factor (Rae1) from Mus musculus (Mouse).